Reading from the N-terminus, the 235-residue chain is Large ribosomal subunit protein uL1 (235 aa).

Belongs to the universal ribosomal protein uL1 family. In terms of assembly, part of the 50S ribosomal subunit.

Functionally, binds directly to 23S rRNA. The L1 stalk is quite mobile in the ribosome, and is involved in E site tRNA release. In terms of biological role, protein L1 is also a translational repressor protein, it controls the translation of the L11 operon by binding to its mRNA. The sequence is that of Large ribosomal subunit protein uL1 from Mycolicibacterium smegmatis (strain ATCC 700084 / mc(2)155) (Mycobacterium smegmatis).